We begin with the raw amino-acid sequence, 513 residues long: Prostaglandin E2 receptor EP4 subtype (513 aa).

Residues 1–44 are Extracellular-facing; it reads MAEVGGTIPRSNRELQRCVLLTTTIMSIPGVNASFSSTPERLNS. An N-linked (GlcNAc...) asparagine glycan is attached at N32. Residues 45–68 traverse the membrane as a helical segment; the sequence is PVTIPAVMFIFGVVGNLVAIVVLC. Residues 69–80 are Cytoplasmic-facing; sequence KSRKEQKETTFY. Residues 81-104 traverse the membrane as a helical segment; it reads TLVCGLAVTDLLGTLLVSPVTIAT. Residues 105–121 lie on the Extracellular side of the membrane; that stretch reads YMKGQWPGDQALCDYST. Residues C117 and C195 are joined by a disulfide bond. Residues 122–140 form a helical membrane-spanning segment; sequence FILLFFGLSGLSIICAMSI. Residues 141–160 are Cytoplasmic-facing; that stretch reads ERYLAINHAYFYSHYVDKRL. Residues 161–185 form a helical membrane-spanning segment; that stretch reads AGLTLFAIYASNVLFCALPNMGLGR. The Extracellular portion of the chain corresponds to 186–209; sequence SERQYPGTWCFIDWTTNVTAYAAF. A helical transmembrane segment spans residues 210–236; it reads SYMYAGFSSFLILATVLCNVLVCGALL. At 237–295 the chain is on the cytoplasmic side; that stretch reads RMHRQFMRRTSLGTEQHHAAAAAAVASVACRGHAGASPALQRLSDFRRRRSFRRIAGAE. The chain crosses the membrane as a helical span at residues 296–323; it reads IQMVILLIATSLVVLICSIPLVVRVFIN. The Extracellular segment spans residues 324–340; sequence QLYQPNVVKDISRNPDL. A helical transmembrane segment spans residues 341–360; the sequence is QAIRIASVNPILDPWIYILL. The Cytoplasmic segment spans residues 361 to 513; that stretch reads RKTVLSKAIE…ETLKLSEKCI (153 aa). A disordered region spans residues 383-403; the sequence is GRDSSAQHCSESRRTSSAMSG. The span at 384–403 shows a compositional bias: polar residues; sequence RDSSAQHCSESRRTSSAMSG. A phosphoserine mark is found at S402, S405, and S407.

Belongs to the G-protein coupled receptor 1 family. In terms of assembly, interacts with FEM1A. In terms of processing, phosphorylation mediates agonist-mediated desensitization by promoting cytoplasmic retention. As to expression, abundant expression in ileum, thymus and mastocytoma P-815 cells. Also observed in lung, spleen, heart and uterus.

Its subcellular location is the cell membrane. Its function is as follows. Receptor for prostaglandin E2 (PGE2). The activity of this receptor is mediated by G(s) proteins that stimulate adenylate cyclase. Has a relaxing effect on smooth muscle. May play an important role in regulating renal hemodynamics, intestinal epithelial transport, adrenal aldosterone secretion, and uterine function. The sequence is that of Prostaglandin E2 receptor EP4 subtype (Ptger4) from Mus musculus (Mouse).